The primary structure comprises 784 residues: Spindle pole body component alp4 (784 aa).

This sequence belongs to the TUBGCP family. Part of the gamma-tubulin complex. Interacts with mcp6. Interacts with mto1. Interacts with mto2.

Its subcellular location is the cytoplasm. The protein localises to the cytoskeleton. It localises to the microtubule organizing center. It is found in the spindle pole body. In terms of biological role, component of the gamma tubule complex that is required for the regulation of both interphase microtubules and mitotic bipolar spindles. The polypeptide is Spindle pole body component alp4 (alp4) (Schizosaccharomyces pombe (strain 972 / ATCC 24843) (Fission yeast)).